Consider the following 246-residue polypeptide: Pyridoxine 5'-phosphate synthase (246 aa).

A 3-amino-2-oxopropyl phosphate-binding site is contributed by N12. Residue 14–15 coordinates 1-deoxy-D-xylulose 5-phosphate; the sequence is DH. 3-amino-2-oxopropyl phosphate is bound at residue R23. H48 acts as the Proton acceptor in catalysis. 1-deoxy-D-xylulose 5-phosphate contacts are provided by R50 and H55. The active-site Proton acceptor is the E75. Residue T105 coordinates 1-deoxy-D-xylulose 5-phosphate. H196 (proton donor) is an active-site residue. 3-amino-2-oxopropyl phosphate contacts are provided by residues G197 and 218–219; that span reads GH.

The protein belongs to the PNP synthase family. In terms of assembly, homooctamer; tetramer of dimers.

The protein localises to the cytoplasm. The enzyme catalyses 3-amino-2-oxopropyl phosphate + 1-deoxy-D-xylulose 5-phosphate = pyridoxine 5'-phosphate + phosphate + 2 H2O + H(+). It functions in the pathway cofactor biosynthesis; pyridoxine 5'-phosphate biosynthesis; pyridoxine 5'-phosphate from D-erythrose 4-phosphate: step 5/5. Its function is as follows. Catalyzes the complicated ring closure reaction between the two acyclic compounds 1-deoxy-D-xylulose-5-phosphate (DXP) and 3-amino-2-oxopropyl phosphate (1-amino-acetone-3-phosphate or AAP) to form pyridoxine 5'-phosphate (PNP) and inorganic phosphate. The chain is Pyridoxine 5'-phosphate synthase from Pseudomonas syringae pv. syringae (strain B728a).